Here is a 352-residue protein sequence, read N- to C-terminus: Quinolinate synthase (352 aa).

The iminosuccinate site is built by His48 and Ser69. A [4Fe-4S] cluster-binding site is contributed by Cys114. Iminosuccinate is bound by residues 140-142 (YAN) and Ser157. Cys201 is a [4Fe-4S] cluster binding site. Iminosuccinate-binding positions include 227-229 (HPE) and Thr244. Cys298 contributes to the [4Fe-4S] cluster binding site.

The protein belongs to the quinolinate synthase family. Type 1 subfamily. The cofactor is [4Fe-4S] cluster.

The protein localises to the cytoplasm. It catalyses the reaction iminosuccinate + dihydroxyacetone phosphate = quinolinate + phosphate + 2 H2O + H(+). The protein operates within cofactor biosynthesis; NAD(+) biosynthesis; quinolinate from iminoaspartate: step 1/1. Its function is as follows. Catalyzes the condensation of iminoaspartate with dihydroxyacetone phosphate to form quinolinate. This is Quinolinate synthase from Pseudomonas aeruginosa (strain UCBPP-PA14).